Here is a 338-residue protein sequence, read N- to C-terminus: Holliday junction branch migration complex subunit RuvB (338 aa).

The tract at residues 1–181 is large ATPase domain (RuvB-L); sequence MDRIVEIEKV…FGMDFRLQFY (181 aa). Residues Leu-20, Arg-21, Gly-62, Lys-65, Thr-66, Thr-67, 128–130, Arg-171, Tyr-181, and Arg-218 each bind ATP; that span reads EDF. Thr-66 contacts Mg(2+). A small ATPAse domain (RuvB-S) region spans residues 182–252; sequence STAELSRIIQ…RAKEGLNALG (71 aa). Residues 255–338 form a head domain (RuvB-H) region; that stretch reads SLGFDEMDIK…NRTKGLFDGE (84 aa). Positions 309 and 314 each coordinate DNA.

It belongs to the RuvB family. In terms of assembly, homohexamer. Forms an RuvA(8)-RuvB(12)-Holliday junction (HJ) complex. HJ DNA is sandwiched between 2 RuvA tetramers; dsDNA enters through RuvA and exits via RuvB. An RuvB hexamer assembles on each DNA strand where it exits the tetramer. Each RuvB hexamer is contacted by two RuvA subunits (via domain III) on 2 adjacent RuvB subunits; this complex drives branch migration. In the full resolvosome a probable DNA-RuvA(4)-RuvB(12)-RuvC(2) complex forms which resolves the HJ.

The protein resides in the cytoplasm. The catalysed reaction is ATP + H2O = ADP + phosphate + H(+). Functionally, the RuvA-RuvB-RuvC complex processes Holliday junction (HJ) DNA during genetic recombination and DNA repair, while the RuvA-RuvB complex plays an important role in the rescue of blocked DNA replication forks via replication fork reversal (RFR). RuvA specifically binds to HJ cruciform DNA, conferring on it an open structure. The RuvB hexamer acts as an ATP-dependent pump, pulling dsDNA into and through the RuvAB complex. RuvB forms 2 homohexamers on either side of HJ DNA bound by 1 or 2 RuvA tetramers; 4 subunits per hexamer contact DNA at a time. Coordinated motions by a converter formed by DNA-disengaged RuvB subunits stimulates ATP hydrolysis and nucleotide exchange. Immobilization of the converter enables RuvB to convert the ATP-contained energy into a lever motion, pulling 2 nucleotides of DNA out of the RuvA tetramer per ATP hydrolyzed, thus driving DNA branch migration. The RuvB motors rotate together with the DNA substrate, which together with the progressing nucleotide cycle form the mechanistic basis for DNA recombination by continuous HJ branch migration. Branch migration allows RuvC to scan DNA until it finds its consensus sequence, where it cleaves and resolves cruciform DNA. This is Holliday junction branch migration complex subunit RuvB from Campylobacter curvus (strain 525.92).